The primary structure comprises 446 residues: NADH-quinone oxidoreductase subunit D (446 aa).

Belongs to the complex I 49 kDa subunit family. In terms of assembly, NDH-1 is composed of 14 different subunits. Subunits NuoB, C, D, E, F, and G constitute the peripheral sector of the complex.

It is found in the cell membrane. The enzyme catalyses a quinone + NADH + 5 H(+)(in) = a quinol + NAD(+) + 4 H(+)(out). Functionally, NDH-1 shuttles electrons from NADH, via FMN and iron-sulfur (Fe-S) centers, to quinones in the respiratory chain. The immediate electron acceptor for the enzyme in this species is believed to be a menaquinone. Couples the redox reaction to proton translocation (for every two electrons transferred, four hydrogen ions are translocated across the cytoplasmic membrane), and thus conserves the redox energy in a proton gradient. The polypeptide is NADH-quinone oxidoreductase subunit D (Nocardioides sp. (strain ATCC BAA-499 / JS614)).